Reading from the N-terminus, the 304-residue chain is Acetyl-coenzyme A carboxylase carboxyl transferase subunit beta (304 aa).

One can recognise a CoA carboxyltransferase N-terminal domain in the interval 25 to 294 (LWIKCPETGE…KAIKRDTATE (270 aa)).

Belongs to the AccD/PCCB family. In terms of assembly, acetyl-CoA carboxylase is a heterohexamer composed of biotin carboxyl carrier protein (AccB), biotin carboxylase (AccC) and two subunits each of ACCase subunit alpha (AccA) and ACCase subunit beta (AccD).

It localises to the cytoplasm. It catalyses the reaction N(6)-carboxybiotinyl-L-lysyl-[protein] + acetyl-CoA = N(6)-biotinyl-L-lysyl-[protein] + malonyl-CoA. The protein operates within lipid metabolism; malonyl-CoA biosynthesis; malonyl-CoA from acetyl-CoA: step 1/1. Functionally, component of the acetyl coenzyme A carboxylase (ACC) complex. Biotin carboxylase (BC) catalyzes the carboxylation of biotin on its carrier protein (BCCP) and then the CO(2) group is transferred by the transcarboxylase to acetyl-CoA to form malonyl-CoA. The protein is Acetyl-coenzyme A carboxylase carboxyl transferase subunit beta of Sinorhizobium medicae (strain WSM419) (Ensifer medicae).